The primary structure comprises 513 residues: Bifunctional purine biosynthesis protein PurH (513 aa).

Residues 1–144 (MKRALISVSD…KNYQDVTVVT (144 aa)) form the MGS-like domain.

The protein belongs to the PurH family.

It catalyses the reaction (6R)-10-formyltetrahydrofolate + 5-amino-1-(5-phospho-beta-D-ribosyl)imidazole-4-carboxamide = 5-formamido-1-(5-phospho-D-ribosyl)imidazole-4-carboxamide + (6S)-5,6,7,8-tetrahydrofolate. The catalysed reaction is IMP + H2O = 5-formamido-1-(5-phospho-D-ribosyl)imidazole-4-carboxamide. It functions in the pathway purine metabolism; IMP biosynthesis via de novo pathway; 5-formamido-1-(5-phospho-D-ribosyl)imidazole-4-carboxamide from 5-amino-1-(5-phospho-D-ribosyl)imidazole-4-carboxamide (10-formyl THF route): step 1/1. It participates in purine metabolism; IMP biosynthesis via de novo pathway; IMP from 5-formamido-1-(5-phospho-D-ribosyl)imidazole-4-carboxamide: step 1/1. This Lactobacillus acidophilus (strain ATCC 700396 / NCK56 / N2 / NCFM) protein is Bifunctional purine biosynthesis protein PurH.